The following is a 326-amino-acid chain: Peroxidase 43 (326 aa).

Positions 1-24 (MVWANAKMRLALSLVTVFFGISLA) are cleaved as a signal peptide. Cystine bridges form between cysteine 35–cysteine 112, cysteine 68–cysteine 73, cysteine 118–cysteine 322, and cysteine 196–cysteine 228. Residue histidine 66 is the Proton acceptor of the active site. 5 residues coordinate Ca(2+): aspartate 67, valine 70, glycine 72, aspartate 74, and serine 76. The N-linked (GlcNAc...) asparagine glycan is linked to asparagine 151. Proline 159 lines the substrate pocket. Residue histidine 189 participates in heme b binding. Position 190 (threonine 190) interacts with Ca(2+). Ca(2+) contacts are provided by aspartate 241, serine 244, and aspartate 249.

The protein belongs to the peroxidase family. Classical plant (class III) peroxidase subfamily. Heme b is required as a cofactor. Requires Ca(2+) as cofactor.

The protein resides in the secreted. It carries out the reaction 2 a phenolic donor + H2O2 = 2 a phenolic radical donor + 2 H2O. In terms of biological role, removal of H(2)O(2), oxidation of toxic reductants, biosynthesis and degradation of lignin, suberization, auxin catabolism, response to environmental stresses such as wounding, pathogen attack and oxidative stress. These functions might be dependent on each isozyme/isoform in each plant tissue. This chain is Peroxidase 43 (PER43), found in Arabidopsis thaliana (Mouse-ear cress).